A 224-amino-acid polypeptide reads, in one-letter code: Pyridoxine/pyridoxamine 5'-phosphate oxidase (224 aa).

Substrate is bound by residues 14 to 17 (REHY) and lysine 76. Residues 71–76 (RTVLMK), 86–87 (YT), arginine 92, lysine 93, and glutamine 115 contribute to the FMN site. Tyrosine 133, arginine 137, and serine 141 together coordinate substrate. FMN-binding positions include 150–151 (QS) and tryptophan 196. 202–204 (RLH) provides a ligand contact to substrate. Arginine 206 provides a ligand contact to FMN.

It belongs to the pyridoxamine 5'-phosphate oxidase family. Homodimer. FMN is required as a cofactor.

It catalyses the reaction pyridoxamine 5'-phosphate + O2 + H2O = pyridoxal 5'-phosphate + H2O2 + NH4(+). The enzyme catalyses pyridoxine 5'-phosphate + O2 = pyridoxal 5'-phosphate + H2O2. The protein operates within cofactor metabolism; pyridoxal 5'-phosphate salvage; pyridoxal 5'-phosphate from pyridoxamine 5'-phosphate: step 1/1. It functions in the pathway cofactor metabolism; pyridoxal 5'-phosphate salvage; pyridoxal 5'-phosphate from pyridoxine 5'-phosphate: step 1/1. Its function is as follows. Catalyzes the oxidation of either pyridoxine 5'-phosphate (PNP) or pyridoxamine 5'-phosphate (PMP) into pyridoxal 5'-phosphate (PLP). This chain is Pyridoxine/pyridoxamine 5'-phosphate oxidase, found in Streptomyces avermitilis (strain ATCC 31267 / DSM 46492 / JCM 5070 / NBRC 14893 / NCIMB 12804 / NRRL 8165 / MA-4680).